Consider the following 231-residue polypeptide: Venom allergen 3 homolog (231 aa).

The N-terminal stretch at Met1–Ala21 is a signal peptide. Cystine bridges form between Cys25–Cys40, Cys30–Cys124, and Cys51–Cys117. An SCP domain is found at Val68–Tyr215. A glycan (N-linked (GlcNAc...) asparagine) is linked at Asn145. Cys196 and Cys213 are oxidised to a cystine.

It belongs to the CRISP family. As to expression, expressed by the venom gland.

It localises to the secreted. This Dinoponera quadriceps (South American ant) protein is Venom allergen 3 homolog.